The primary structure comprises 243 residues: Epoxyqueuosine reductase QueH (243 aa).

Over residues 1–16 (MHRTKLEQKQPHFDAQ) the composition is skewed to basic and acidic residues. Residues 1-30 (MHRTKLEQKQPHFDAQKRRKKECKNSNTPF) are disordered. [4Fe-4S] cluster-binding residues include Cys49, Cys50, Cys128, and Cys131. A disulfide bond links Cys211 and Cys213.

The protein belongs to the QueH family.

It carries out the reaction epoxyqueuosine(34) in tRNA + AH2 = queuosine(34) in tRNA + A + H2O. It participates in tRNA modification; tRNA-queuosine biosynthesis. In terms of biological role, catalyzes the conversion of epoxyqueuosine (oQ) to queuosine (Q), which is a hypermodified base found in the wobble positions of tRNA(Asp), tRNA(Asn), tRNA(His) and tRNA(Tyr). The polypeptide is Epoxyqueuosine reductase QueH (Histophilus somni (strain 129Pt) (Haemophilus somnus)).